The chain runs to 156 residues: Transcription elongation factor GreA (156 aa).

A coiled-coil region spans residues 45–66 (NAEYHSAKEKQSFIEGRIKELE).

The protein belongs to the GreA/GreB family.

In terms of biological role, necessary for efficient RNA polymerase transcription elongation past template-encoded arresting sites. The arresting sites in DNA have the property of trapping a certain fraction of elongating RNA polymerases that pass through, resulting in locked ternary complexes. Cleavage of the nascent transcript by cleavage factors such as GreA or GreB allows the resumption of elongation from the new 3'terminus. GreA releases sequences of 2 to 3 nucleotides. In Jannaschia sp. (strain CCS1), this protein is Transcription elongation factor GreA.